The chain runs to 373 residues: 4-hydroxy-3-methylbut-2-en-1-yl diphosphate synthase (flavodoxin) (373 aa).

Residues cysteine 270, cysteine 273, cysteine 305, and glutamate 312 each coordinate [4Fe-4S] cluster.

This sequence belongs to the IspG family. Requires [4Fe-4S] cluster as cofactor.

It catalyses the reaction (2E)-4-hydroxy-3-methylbut-2-enyl diphosphate + oxidized [flavodoxin] + H2O + 2 H(+) = 2-C-methyl-D-erythritol 2,4-cyclic diphosphate + reduced [flavodoxin]. The protein operates within isoprenoid biosynthesis; isopentenyl diphosphate biosynthesis via DXP pathway; isopentenyl diphosphate from 1-deoxy-D-xylulose 5-phosphate: step 5/6. Converts 2C-methyl-D-erythritol 2,4-cyclodiphosphate (ME-2,4cPP) into 1-hydroxy-2-methyl-2-(E)-butenyl 4-diphosphate. The chain is 4-hydroxy-3-methylbut-2-en-1-yl diphosphate synthase (flavodoxin) from Pectobacterium carotovorum subsp. carotovorum (strain PC1).